We begin with the raw amino-acid sequence, 480 residues long: MAENFGKVIQISGPAVDVQFSETTLPEIYTALRVVSEGFDVPTPINVVLEIQQHLGEGRVRCVAMEPTEGMVRGMKAIDMGGPISVPVGRGTLGRVMNVIGEPVDQLGPIMVEKRNPIHRQAPAFDEQATTAEMFETGIKVIDLIQPFLKGGKIGLFGGAGVGKTVVIQELINNVAKQHGGFSVFGGVGERTREGNDLWLEFTEAGVITPGDPSKSKAALVYGQMTEPPGARLRVALTALTVAEYFRDEEGTDTLLFIDNIFRFTQAGSEVSTLLGRMPSAVGYQPNLATEMGELQERITSTKRGSVTSVQAIYVPADDLTDPAPATTFAHLDATTVLSRALTEIGIYPAVDPLGSTSRILDPRIVGQEHYDVAQGVKGILQQYKDLQDIIAILGIDELSEDQKLTVSRARKIQRFLSQPFHVAEQFTGFPGRYVKIADTVRSFREILQGKHDEIPEQAFYMKGTIDEVHEAAEKMKANA.

Position 158–165 (Gly-158–Thr-165) interacts with ATP.

It belongs to the ATPase alpha/beta chains family. In terms of assembly, F-type ATPases have 2 components, CF(1) - the catalytic core - and CF(0) - the membrane proton channel. CF(1) has five subunits: alpha(3), beta(3), gamma(1), delta(1), epsilon(1). CF(0) has three main subunits: a(1), b(2) and c(9-12). The alpha and beta chains form an alternating ring which encloses part of the gamma chain. CF(1) is attached to CF(0) by a central stalk formed by the gamma and epsilon chains, while a peripheral stalk is formed by the delta and b chains.

It is found in the cell inner membrane. The catalysed reaction is ATP + H2O + 4 H(+)(in) = ADP + phosphate + 5 H(+)(out). Produces ATP from ADP in the presence of a proton gradient across the membrane. The catalytic sites are hosted primarily by the beta subunits. The polypeptide is ATP synthase subunit beta (Koribacter versatilis (strain Ellin345)).